We begin with the raw amino-acid sequence, 144 residues long: Ribosomal RNA large subunit methyltransferase H (144 aa).

S-adenosyl-L-methionine is bound by residues G92 and 111-116 (LSPMTF).

This sequence belongs to the RNA methyltransferase RlmH family. Homodimer.

The protein resides in the cytoplasm. The catalysed reaction is pseudouridine(1915) in 23S rRNA + S-adenosyl-L-methionine = N(3)-methylpseudouridine(1915) in 23S rRNA + S-adenosyl-L-homocysteine + H(+). In terms of biological role, specifically methylates the pseudouridine at position 1915 (m3Psi1915) in 23S rRNA. In Synechococcus sp. (strain CC9311), this protein is Ribosomal RNA large subunit methyltransferase H.